Reading from the N-terminus, the 206-residue chain is Outer-membrane lipoprotein carrier protein (206 aa).

The N-terminal stretch at 1–21 is a signal peptide; the sequence is MKKLLCAVLLSPLLYSNAVLA.

Belongs to the LolA family. In terms of assembly, monomer.

The protein resides in the periplasm. Participates in the translocation of lipoproteins from the inner membrane to the outer membrane. Only forms a complex with a lipoprotein if the residue after the N-terminal Cys is not an aspartate (The Asp acts as a targeting signal to indicate that the lipoprotein should stay in the inner membrane). This Shewanella sp. (strain ANA-3) protein is Outer-membrane lipoprotein carrier protein.